Here is a 708-residue protein sequence, read N- to C-terminus: MTMDEQQSQAVAPVYVGGFLARYDQSPDEAELLLPRDVVEHWLHAQGQGQPSLSVALPLNINHDDTAVVGHVAAMQSVRDGLFCLGCVTSPRFLEIVRRASEKSELVSRGPVSPLQPDKVVEFLSGSYAGLSLSSRRCDDVEAATSLSGSETTPFKHVALCSVGRRRGTLAVYGRDPEWVTQRFPDLTAADRDGLRAQWQRCGSTAVDASGDPFRSDSYGLLGNSVDALYIRERLPKLRYDKQLVGVTERESYVKASVSPEAACVIKAASAERSGDSRSQAATPAAGARVPSSSPSPPVEPPSPVQPPALPASPSVLPAESPPSLSPSEPAEAASMSHPLSAAVPAATAPPGATVAGASPAVSSLAWPHDGVYLPKDAFFSLLGASRSAAPVMYPGAVAAPPSASPAPLPLPSYPASYGAPVVGYDQLAARHFADYVDPHYPGWGRRYEPAPSLHPSYPVPPPPSPAYYRRRDSPGGMDEPPSGWERYDGGHRGQSQKQHRHGGSGGHNKRRKETAAASSSSSDEDLSFPGEAEHGRARKRLKSHVNSDGGSGGHAGSNQQQQQRYDELRDAIHELKRDLFAARQSSTLLSAALPSAASSSPTTTTVCTPTSELTSGGGETPTALLSGGAKVAERAQAGVVNASCRLATASGSEAATAGPSTAGSSSCPASVVLAAAAAQAAAASQSPPKDMVDLNRRIFVAALNKLE.

Residues His-63, Ser-132, and His-157 each act as charge relay system in the active site. 3 disordered regions span residues 270–339 (SAER…MSHP), 455–565 (HPSY…QQQR), and 593–620 (ALPS…GGGE). Positions 284-293 (PAAGARVPSS) are enriched in low complexity. The span at 294–311 (SPSPPVEPPSPVQPPALP) shows a compositional bias: pro residues. A compositionally biased stretch (low complexity) spans 326 to 339 (SPSEPAEAASMSHP). Residues 333 to 352 (AASMSHPLSAAVPAATAPPG) are interaction with pAP. Residues 498–513 (KQHRHGGSGGHNKRRK) are compositionally biased toward basic residues. 2 consecutive short sequence motifs (nuclear localization signal) follow at residues 510–515 (KRRKET) and 537–543 (RARKRLK). Over residues 593–615 (ALPSAASSSPTTTTVCTPTSELT) the composition is skewed to low complexity. The interval 688–708 (PPKDMVDLNRRIFVAALNKLE) is interaction with major capsid protein.

This sequence belongs to the herpesviridae capsid scaffolding protein family. In terms of assembly, homomultimer. Interacts with major capsid protein. Exists in a monomer-dimer equilibrium with the dimer being the active species. Capsid scaffolding protein is cleaved by assemblin after formation of the spherical procapsid. As a result, the capsid obtains its mature, icosahedral shape. Cleavages occur at two or more sites: release (R-site) and maturation (M-site).

The protein resides in the host cytoplasm. It is found in the host nucleus. The catalysed reaction is Cleaves -Ala-|-Ser- and -Ala-|-Ala- bonds in the scaffold protein.. Acts as a scaffold protein by binding major capsid protein in the cytoplasm, inducing the nuclear localization of both proteins. Multimerizes in the nucleus such as major capsid protein forms the icosahedral T=16 capsid. Autocatalytic cleavage releases the assembly protein, and subsequently abolishes interaction with major capsid protein. Cleavages products are evicted from the capsid before or during DNA packaging. Functionally, protease that plays an essential role in virion assembly within the nucleus. Catalyzes the cleavage of the assembly protein after formation of the spherical procapsid. By that cleavage, the capsid matures and gains its icosahedral shape. The cleavage sites seem to include -Ala-Ser-, -Ala-Ala-, as well as Ala-Thr bonds. Assemblin and cleavages products are evicted from the capsid before or during DNA packaging. Its function is as follows. Plays a major role in capsid assembly. Acts as a scaffold protein by binding major capsid protein. Multimerizes in the nucleus such as major capsid protein forms the icosahedral T=16 capsid. Cleaved by assemblin after capsid completion. The cleavages products are evicted from the capsid before or during DNA packaging. The sequence is that of Capsid scaffolding protein (UL80) from Homo sapiens (Human).